A 272-amino-acid polypeptide reads, in one-letter code: Glutamate racemase (272 aa).

Residues 13 to 14 (DS) and 45 to 46 (YG) each bind substrate. Cys76 (proton donor/acceptor) is an active-site residue. Residue 77 to 78 (NT) participates in substrate binding. Cys187 acts as the Proton donor/acceptor in catalysis. A substrate-binding site is contributed by 188 to 189 (TH).

Belongs to the aspartate/glutamate racemases family.

It catalyses the reaction L-glutamate = D-glutamate. The protein operates within cell wall biogenesis; peptidoglycan biosynthesis. Provides the (R)-glutamate required for cell wall biosynthesis. The chain is Glutamate racemase from Roseiflexus sp. (strain RS-1).